A 61-amino-acid chain; its full sequence is Alpha-conotoxin CnIJ (61 aa).

The first 17 residues, 1 to 17, serve as a signal peptide directing secretion; it reads MMFTVFLLVVLTTTVVS. Positions 18 to 44 are excised as a propeptide; the sequence is FPSDSASDGRDDEAKDERSDMYELKRN. Disulfide bonds link cysteine 47-cysteine 52 and cysteine 48-cysteine 59. A Cysteine amide modification is found at cysteine 59.

It belongs to the conotoxin A superfamily. Expressed by the venom duct.

The protein localises to the secreted. The sequence is that of Alpha-conotoxin CnIJ from Conus consors (Singed cone).